Reading from the N-terminus, the 495-residue chain is BUB3-interacting and GLEBS motif-containing protein ZNF207 (495 aa).

The microtubule-binding region stretch occupies residues 1 to 92 (MGRKKKKQLK…EGIPEKDMDE (92 aa)). 2 C2H2-type zinc fingers span residues 11–34 (PWCW…KAKH) and 35–58 (FKCH…MQVH). Residues 99 to 111 (QKTQESQKKKQQD) are compositionally biased toward basic and acidic residues. 3 disordered regions span residues 99–161 (QKTQ…PGIP), 252–292 (PPAP…SNSE), and 316–372 (VGTD…ATLT). Residues 112 to 121 (DSDEYDDDES) are compositionally biased toward acidic residues. The span at 127 to 136 (FQPQPVQPQQ) shows a compositional bias: polar residues. Residues 142 to 161 (MAQPGLPPVPGAPGMPPGIP) show a composition bias toward pro residues. Low complexity-rich tracts occupy residues 283–292 (SSSTASSNSE) and 326–372 (TPAA…ATLT). Positions 376–408 (ATSKLIHPDEDISLEERRAQLPKYQRNLPRPGQ) are GLEBS. Positions 462 to 495 (PYGQGPPMVPPYQGGPPRPPMGMRPPVMSQGGRY) are disordered. A compositionally biased stretch (pro residues) spans 464–484 (GQGPPMVPPYQGGPPRPPMGM).

As to quaternary structure, interacts (via GLEBS region) with BUB3. As to expression, in day-13 embryo, strongly expressed in the nervous system (brain, spinal cord and dorsal root ganglia), with strong to weak expression in other regions. Continues to be strongly expressed in the neonatal brain while expression is weak in the brain and spinal cord of adult.

The protein localises to the nucleus. Its subcellular location is the chromosome. It is found in the centromere. The protein resides in the kinetochore. It localises to the cytoplasm. The protein localises to the cytoskeleton. Its subcellular location is the spindle. Its function is as follows. Kinetochore- and microtubule-binding protein that plays a key role in spindle assembly. ZNF207/BuGZ is mainly composed of disordered low-complexity regions and undergoes phase transition or coacervation to form temperature-dependent liquid droplets. Coacervation promotes microtubule bundling and concentrates tubulin, promoting microtubule polymerization and assembly of spindle and spindle matrix by concentrating its building blocks. Also acts as a regulator of mitotic chromosome alignment by mediating the stability and kinetochore loading of BUB3. Mechanisms by which BUB3 is protected are unclear: according to a first report, ZNF207/BuGZ may act by blocking ubiquitination and proteasomal degradation of BUB3. According to another report, the stabilization is independent of the proteasome. The chain is BUB3-interacting and GLEBS motif-containing protein ZNF207 from Mus musculus (Mouse).